Here is a 591-residue protein sequence, read N- to C-terminus: Myelin expression factor 2 (591 aa).

The interval 1–92 is disordered; sequence MADADKSEAA…GEKKGPNRNR (92 aa). The segment covering 22 to 36 has biased composition (basic and acidic residues); sequence EPRRDTHPGEPEKPP. Lys44 is covalently cross-linked (Glycyl lysine isopeptide (Lys-Gly) (interchain with G-Cter in SUMO2)). Basic and acidic residues-rich tracts occupy residues 45-63 and 74-87; these read MENDESVKEEKSDLKEKST and YSKDKNSGTGEKKG. 2 RRM domains span residues 91 to 169 and 224 to 301; these read NRVF…EDPD and STIF…MDDK. Omega-N-methylarginine occurs at positions 397 and 417. Residue Ser422 is modified to Phosphoserine. The 77-residue stretch at 514 to 590 folds into the RRM 3 domain; the sequence is NQIFVRNLPF…REIDVRLDRN (77 aa).

In terms of assembly, monomer. In terms of tissue distribution, highly expressed in the brain.

The protein localises to the nucleus. Transcriptional repressor of the myelin basic protein gene (MBP). Binds to the proximal MB1 element 5'-TTGTCC-3' of the MBP promoter. Its binding to MB1 and function are inhibited by PURA. This Mus musculus (Mouse) protein is Myelin expression factor 2 (Myef2).